The sequence spans 243 residues: Uridylate kinase (243 aa).

18-21 contacts ATP; that stretch reads KLGG. Residue Gly-59 coordinates UMP. Gly-60 and Arg-64 together coordinate ATP. Residues Asp-79 and 140 to 147 contribute to the UMP site; that span reads MGMPYFST. ATP contacts are provided by Tyr-173 and Asp-176.

The protein belongs to the UMP kinase family. In terms of assembly, homohexamer.

The protein localises to the cytoplasm. The catalysed reaction is UMP + ATP = UDP + ADP. Its pathway is pyrimidine metabolism; CTP biosynthesis via de novo pathway; UDP from UMP (UMPK route): step 1/1. With respect to regulation, inhibited by UTP. In terms of biological role, catalyzes the reversible phosphorylation of UMP to UDP. In Corynebacterium glutamicum (strain R), this protein is Uridylate kinase.